Reading from the N-terminus, the 555-residue chain is CTP synthase (555 aa).

Positions 1-272 are amidoligase domain; that stretch reads MQPTSTTTKH…DAYVVRKLDL (272 aa). Ser-19 serves as a coordination point for CTP. Ser-19 serves as a coordination point for UTP. Residues 20-25 and Asp-77 each bind ATP; that span reads SLGKGL. Residues Asp-77 and Glu-146 each coordinate Mg(2+). CTP-binding positions include 153–155, 193–198, and Lys-229; these read DIE and KTKPTQ. UTP-binding positions include 193 to 198 and Lys-229; that span reads KTKPTQ. Positions 297–548 constitute a Glutamine amidotransferase type-1 domain; sequence TVALVGKYID…VKAAVARQVA (252 aa). Gly-360 contributes to the L-glutamine binding site. Cys-387 serves as the catalytic Nucleophile; for glutamine hydrolysis. L-glutamine-binding positions include 388–391, Glu-411, and Arg-473; that span reads LGLQ. Catalysis depends on residues His-521 and Glu-523.

This sequence belongs to the CTP synthase family. In terms of assembly, homotetramer.

It carries out the reaction UTP + L-glutamine + ATP + H2O = CTP + L-glutamate + ADP + phosphate + 2 H(+). It catalyses the reaction L-glutamine + H2O = L-glutamate + NH4(+). The enzyme catalyses UTP + NH4(+) + ATP = CTP + ADP + phosphate + 2 H(+). Its pathway is pyrimidine metabolism; CTP biosynthesis via de novo pathway; CTP from UDP: step 2/2. Allosterically activated by GTP, when glutamine is the substrate; GTP has no effect on the reaction when ammonia is the substrate. The allosteric effector GTP functions by stabilizing the protein conformation that binds the tetrahedral intermediate(s) formed during glutamine hydrolysis. Inhibited by the product CTP, via allosteric rather than competitive inhibition. Catalyzes the ATP-dependent amination of UTP to CTP with either L-glutamine or ammonia as the source of nitrogen. Regulates intracellular CTP levels through interactions with the four ribonucleotide triphosphates. This chain is CTP synthase, found in Streptomyces griseus subsp. griseus (strain JCM 4626 / CBS 651.72 / NBRC 13350 / KCC S-0626 / ISP 5235).